The sequence spans 1091 residues: Protein CTR9 homolog (1091 aa).

Residue Ala-2 is modified to N-acetylalanine. TPR repeat units follow at residues 90–127 (GAYY…DMHE), 128–161 (PSTW…APDN), 163–195 (PALL…FPGC), 197–230 (AAVR…DPDN), 232–267 (EALV…YPYC), 305–338 (SHSF…TNNN), 343–376 (VFPY…YPDN), 377–410 (CETL…DPRD), 412–443 (QAFV…MKKG), 449–482 (IEVL…GIWI), 558–591 (IDAY…DDKN), 593–625 (NALS…TDGK), 640–673 (AAMR…HNSN), 674–707 (MYAA…ASGS), 713–746 (PDVW…FFYN), and 749–782 (SQIL…TPSN). The disordered stretch occupies residues 919-1091 (FQRIKEQWKS…EEEEEEEEAN (173 aa)). Residues 951 to 965 (ERRRKKGGKRRKKDK) are compositionally biased toward basic residues. 4 stretches are compositionally biased toward acidic residues: residues 974-993 (DDEE…DEDA), 1003-1016 (MTTQ…DDDA), 1026-1035 (EDPDVDDDEV), and 1080-1091 (NMEEEEEEEEAN).

Component of the nuclear PAF1 complex (PAF1C), which consists of VIP2/ELF7/PAF1, VIP3/SKI8/WDR61, VIP4/LEO1, VIP5/RTF1, VIP6/ELF8/CTR9 and CDC73. Interacts with VIP3 and VIP4. As to expression, expressed in roots, leaves and shoot apex.

It is found in the nucleus. Functionally, component of the PAF1 complex (PAF1C) which is involved in histone modifications such as methylation on histone H3 'Lys-4' (H3K4me3). Involved in regulation of flowering time. Required for the expression of the MADS box genes and flowering repressors FLC, AGL27/FLM and AGL31/MAF2. Required for histone H3 trimethylation on 'Lys-4' H3K4me3 at the FLC and AGL27/FLM loci. Involved in the control of seed dormancy and germination. The chain is Protein CTR9 homolog from Arabidopsis thaliana (Mouse-ear cress).